The sequence spans 594 residues: DNA ligase (594 aa).

Glu280 contacts ATP. The active-site N6-AMP-lysine intermediate is Lys282. Positions 287, 316, 345, 385, 456, and 462 each coordinate ATP.

This sequence belongs to the ATP-dependent DNA ligase family. Requires Mg(2+) as cofactor.

The enzyme catalyses ATP + (deoxyribonucleotide)n-3'-hydroxyl + 5'-phospho-(deoxyribonucleotide)m = (deoxyribonucleotide)n+m + AMP + diphosphate.. In terms of biological role, DNA ligase that seals nicks in double-stranded DNA during DNA replication, DNA recombination and DNA repair. The polypeptide is DNA ligase (Halorubrum lacusprofundi (strain ATCC 49239 / DSM 5036 / JCM 8891 / ACAM 34)).